The primary structure comprises 235 residues: Ubiquinone/menaquinone biosynthesis C-methyltransferase UbiE (235 aa).

S-adenosyl-L-methionine is bound by residues T60, D80, 106–107 (DV), and S123.

The protein belongs to the class I-like SAM-binding methyltransferase superfamily. MenG/UbiE family.

The enzyme catalyses a 2-demethylmenaquinol + S-adenosyl-L-methionine = a menaquinol + S-adenosyl-L-homocysteine + H(+). It catalyses the reaction a 2-methoxy-6-(all-trans-polyprenyl)benzene-1,4-diol + S-adenosyl-L-methionine = a 5-methoxy-2-methyl-3-(all-trans-polyprenyl)benzene-1,4-diol + S-adenosyl-L-homocysteine + H(+). It functions in the pathway quinol/quinone metabolism; menaquinone biosynthesis; menaquinol from 1,4-dihydroxy-2-naphthoate: step 2/2. The protein operates within cofactor biosynthesis; ubiquinone biosynthesis. In terms of biological role, methyltransferase required for the conversion of demethylmenaquinol (DMKH2) to menaquinol (MKH2) and the conversion of 2-polyprenyl-6-methoxy-1,4-benzoquinol (DDMQH2) to 2-polyprenyl-3-methyl-6-methoxy-1,4-benzoquinol (DMQH2). The polypeptide is Ubiquinone/menaquinone biosynthesis C-methyltransferase UbiE (Bdellovibrio bacteriovorus (strain ATCC 15356 / DSM 50701 / NCIMB 9529 / HD100)).